The sequence spans 450 residues: Probable cysteine desulfurase, mitochondrial (450 aa).

Residues methionine 1–isoleucine 52 constitute a mitochondrion transit peptide. Residues alanine 120 to threonine 121, asparagine 200, glutamine 228, and serine 248 to histidine 250 contribute to the pyridoxal 5'-phosphate site. Lysine 251 bears the N6-(pyridoxal phosphate)lysine mark. Pyridoxal 5'-phosphate is bound at residue threonine 288. Cysteine 374 serves as the catalytic Cysteine persulfide intermediate. Cysteine 374 is a [2Fe-2S] cluster binding site.

Belongs to the class-V pyridoxal-phosphate-dependent aminotransferase family. NifS/IscS subfamily. It depends on pyridoxal 5'-phosphate as a cofactor.

It localises to the mitochondrion. It is found in the nucleus. The catalysed reaction is (sulfur carrier)-H + L-cysteine = (sulfur carrier)-SH + L-alanine. In terms of biological role, catalyzes the removal of elemental sulfur from cysteine to produce alanine. It supplies the inorganic sulfur for iron-sulfur (Fe-S) clusters. In Dictyostelium discoideum (Social amoeba), this protein is Probable cysteine desulfurase, mitochondrial (nfs1).